The sequence spans 691 residues: Glycine--tRNA ligase beta subunit (691 aa).

This sequence belongs to the class-II aminoacyl-tRNA synthetase family. In terms of assembly, tetramer of two alpha and two beta subunits.

It is found in the cytoplasm. It carries out the reaction tRNA(Gly) + glycine + ATP = glycyl-tRNA(Gly) + AMP + diphosphate. This is Glycine--tRNA ligase beta subunit from Levilactobacillus brevis (strain ATCC 367 / BCRC 12310 / CIP 105137 / JCM 1170 / LMG 11437 / NCIMB 947 / NCTC 947) (Lactobacillus brevis).